The sequence spans 163 residues: Outer membrane protein assembly factor BamE (163 aa).

The N-terminal stretch at 1-22 (MINKKQSLTLLSAIALSVSLSA) is a signal peptide. The N-palmitoyl cysteine moiety is linked to residue Cys23. Cys23 carries the S-diacylglycerol cysteine lipid modification. A disordered region spans residues 122–163 (EQSKLPMVNTTESAPQVPAQRPDEKPLVKENQTEAQVQKPIK). The span at 142 to 153 (RPDEKPLVKENQ) shows a compositional bias: basic and acidic residues.

Belongs to the BamE family. In terms of assembly, part of the Bam complex.

It localises to the cell outer membrane. Its function is as follows. Part of the outer membrane protein assembly complex, which is involved in assembly and insertion of beta-barrel proteins into the outer membrane. The sequence is that of Outer membrane protein assembly factor BamE from Shewanella oneidensis (strain ATCC 700550 / JCM 31522 / CIP 106686 / LMG 19005 / NCIMB 14063 / MR-1).